Here is a 505-residue protein sequence, read N- to C-terminus: Cytochrome P450 71A2 (505 aa).

Residues 7-27 traverse the membrane as a helical segment; sequence WYSLLIPLFVFIFLLIHHCFF. Cys-448 is a binding site for heme.

This sequence belongs to the cytochrome P450 family. It depends on heme as a cofactor.

It localises to the membrane. In terms of biological role, may have a role in maturation, such as during flavor formation or other metabolite production specific to aging tissues. The polypeptide is Cytochrome P450 71A2 (CYP71A2) (Solanum melongena (Eggplant)).